A 227-amino-acid polypeptide reads, in one-letter code: MGRRYTIKQLPPELRPRERLLAGGASALSDAELLGVLFGIGSREKTAVELAGDVISGAGGLHNLFGASVHELKQVKGIGEAKACILLAALELARRLSVARNPGRPVISSPADVDGLLRGRIANLDREHFVVVLLNTKNEVIEAPTISVGTLSSSLVHPREVFKPAIRASAASVVLAHNHPSGRVEPSREDREVTGRVAEAGGIIGIEVLDHVIVGEGYFSMKEHGML.

In terms of domain architecture, MPN spans 106 to 227; the sequence is VISSPADVDG…YFSMKEHGML (122 aa). Positions 177, 179, and 190 each coordinate Zn(2+). Positions 177-190 match the JAMM motif motif; that stretch reads HNHPSGRVEPSRED.

It belongs to the UPF0758 family.

The chain is UPF0758 protein Rxyl_1530 from Rubrobacter xylanophilus (strain DSM 9941 / JCM 11954 / NBRC 16129 / PRD-1).